The chain runs to 21 residues: Nitrilase (21 aa).

This sequence belongs to the carbon-nitrogen hydrolase superfamily. Nitrilase family.

The catalysed reaction is a nitrile + 2 H2O = a carboxylate + NH4(+). Functionally, acts on many kinds of nitrile compounds such as aliphatic, aromatic, and heterocyclic mononitriles or dinitriles. Prefers S-(-)-2-(4'-isobutylphenyl)-propionitrile to R-(+)-2-(4'-isobutylphenyl)-propionitrile as the substrate. The polypeptide is Nitrilase (Acinetobacter sp. (strain AK226)).